Here is a 447-residue protein sequence, read N- to C-terminus: Tubulin beta-2 chain (447 aa).

GTP contacts are provided by Gln11, Glu69, Ser138, Gly142, Thr143, Gly144, Asn204, and Asn226. Glu69 is a binding site for Mg(2+). The disordered stretch occupies residues 426 to 447 (QDAGVDEEEEEYEEEAPLEEEV). The span at 429-447 (GVDEEEEEYEEEAPLEEEV) shows a compositional bias: acidic residues.

The protein belongs to the tubulin family. Dimer of alpha and beta chains. A typical microtubule is a hollow water-filled tube with an outer diameter of 25 nm and an inner diameter of 15 nM. Alpha-beta heterodimers associate head-to-tail to form protofilaments running lengthwise along the microtubule wall with the beta-tubulin subunit facing the microtubule plus end conferring a structural polarity. Microtubules usually have 13 protofilaments but different protofilament numbers can be found in some organisms and specialized cells. It depends on Mg(2+) as a cofactor.

It is found in the cytoplasm. The protein localises to the cytoskeleton. In terms of biological role, tubulin is the major constituent of microtubules, a cylinder consisting of laterally associated linear protofilaments composed of alpha- and beta-tubulin heterodimers. Microtubules grow by the addition of GTP-tubulin dimers to the microtubule end, where a stabilizing cap forms. Below the cap, tubulin dimers are in GDP-bound state, owing to GTPase activity of alpha-tubulin. This Colletotrichum gloeosporioides (Anthracnose fungus) protein is Tubulin beta-2 chain (TUB2).